The chain runs to 342 residues: MEEDFNIRDHQLTSRERDFENALRPLSFEDFNGQDKVVDNLRIFVKAARLRAEALDHVLLHGPPGLGKTTLSNIIANELGVGFKVTSGPVLDKPGDLAGVLTSLEPNDVLFIDEIHRLSPVVEEYLYSAMEDYRIDIMIDKGPSARSIQIDLNPFTLVGATTRSGLLTAPLRARFGINLHLEYYDDDILSNIISRSAGILDVPCSSQAAGEIASRSRGTPRIANALLRRVRDFAQVKGSGSIDTEIANYALEALNIDKYGLDEIDNKILCTIIDKFKGGPVGLTTIATALGEDAGTIEEVYEPFLIKEGFLKRTPRGREVTELAYKHLGRSLYNSQKTLFND.

The segment at 1-184 is large ATPase domain (RuvB-L); it reads MEEDFNIRDH…FGINLHLEYY (184 aa). Residues Leu-23, Arg-24, Gly-65, Lys-68, Thr-69, Thr-70, 131 to 133, Arg-174, Tyr-184, and Arg-221 each bind ATP; that span reads EDY. Thr-69 contributes to the Mg(2+) binding site. The segment at 185–255 is small ATPAse domain (RuvB-S); that stretch reads DDDILSNIIS…IANYALEALN (71 aa). Residues 258–342 are head domain (RuvB-H); that stretch reads KYGLDEIDNK…YNSQKTLFND (85 aa). DNA-binding residues include Arg-313 and Arg-318.

Belongs to the RuvB family. As to quaternary structure, homohexamer. Forms an RuvA(8)-RuvB(12)-Holliday junction (HJ) complex. HJ DNA is sandwiched between 2 RuvA tetramers; dsDNA enters through RuvA and exits via RuvB. An RuvB hexamer assembles on each DNA strand where it exits the tetramer. Each RuvB hexamer is contacted by two RuvA subunits (via domain III) on 2 adjacent RuvB subunits; this complex drives branch migration. In the full resolvosome a probable DNA-RuvA(4)-RuvB(12)-RuvC(2) complex forms which resolves the HJ.

It is found in the cytoplasm. It carries out the reaction ATP + H2O = ADP + phosphate + H(+). The RuvA-RuvB-RuvC complex processes Holliday junction (HJ) DNA during genetic recombination and DNA repair, while the RuvA-RuvB complex plays an important role in the rescue of blocked DNA replication forks via replication fork reversal (RFR). RuvA specifically binds to HJ cruciform DNA, conferring on it an open structure. The RuvB hexamer acts as an ATP-dependent pump, pulling dsDNA into and through the RuvAB complex. RuvB forms 2 homohexamers on either side of HJ DNA bound by 1 or 2 RuvA tetramers; 4 subunits per hexamer contact DNA at a time. Coordinated motions by a converter formed by DNA-disengaged RuvB subunits stimulates ATP hydrolysis and nucleotide exchange. Immobilization of the converter enables RuvB to convert the ATP-contained energy into a lever motion, pulling 2 nucleotides of DNA out of the RuvA tetramer per ATP hydrolyzed, thus driving DNA branch migration. The RuvB motors rotate together with the DNA substrate, which together with the progressing nucleotide cycle form the mechanistic basis for DNA recombination by continuous HJ branch migration. Branch migration allows RuvC to scan DNA until it finds its consensus sequence, where it cleaves and resolves cruciform DNA. The chain is Holliday junction branch migration complex subunit RuvB from Bacteroides fragilis (strain ATCC 25285 / DSM 2151 / CCUG 4856 / JCM 11019 / LMG 10263 / NCTC 9343 / Onslow / VPI 2553 / EN-2).